A 333-amino-acid polypeptide reads, in one-letter code: 1,5-anhydro-D-fructose reductase (333 aa).

NADP(+) is bound by residues 9–12 (ASTI), 33–34 (SS), Arg-38, 71–76 (TTNELH), 93–94 (EK), Asn-120, 162–163 (WR), and Tyr-283.

This sequence belongs to the Gfo/Idh/MocA family. Monomer.

The catalysed reaction is 1,5-anhydro-D-mannitol + NADP(+) = 1,5-anhydro-D-fructose + NADPH + H(+). Functionally, catalyzes the NADPH-specific reduction of 1,5-anhydro-D-fructose to 1,5-anhydro-D-mannitol. This chain is 1,5-anhydro-D-fructose reductase (afr), found in Rhizobium meliloti (strain 1021) (Ensifer meliloti).